Here is a 445-residue protein sequence, read N- to C-terminus: Retrovirus-related Pol polyprotein from type-1 retrotransposable element R2 (445 aa).

The 114-residue stretch at 1–114 (QPSVFNLVKW…LSRDDSLAKA (114 aa)) folds into the Reverse transcriptase domain. The nucleic acid-binding endonuclease stretch occupies residues 115 to 445 (MLASAGPAAE…GATPRQLIEY (331 aa)). Residues 380–389 (GPRPAHHHQP) are compositionally biased toward basic residues. The segment at 380–445 (GPRPAHHHQP…GATPRQLIEY (66 aa)) is disordered. The segment covering 396–405 (ATANTGTLQS) has biased composition (polar residues).

The enzyme catalyses DNA(n) + a 2'-deoxyribonucleoside 5'-triphosphate = DNA(n+1) + diphosphate. This chain is Retrovirus-related Pol polyprotein from type-1 retrotransposable element R2, found in Popillia japonica (Japanese beetle).